Reading from the N-terminus, the 374-residue chain is Flagellar P-ring protein (374 aa).

Residues methionine 1–alanine 29 form the signal peptide.

It belongs to the FlgI family. In terms of assembly, the basal body constitutes a major portion of the flagellar organelle and consists of four rings (L,P,S, and M) mounted on a central rod.

Its subcellular location is the periplasm. It is found in the bacterial flagellum basal body. Functionally, assembles around the rod to form the L-ring and probably protects the motor/basal body from shearing forces during rotation. This Bradyrhizobium sp. (strain BTAi1 / ATCC BAA-1182) protein is Flagellar P-ring protein.